A 364-amino-acid polypeptide reads, in one-letter code: Glycine oxidase (364 aa).

Residues 12 to 13 (VI), 32 to 33 (ER), 40 to 41 (AS), 45 to 47 (GGI), and V173 each bind FAD. R302 lines the substrate pocket. Residue 327-333 (HYRNGLV) coordinates FAD.

Belongs to the DAO family. ThiO subfamily. As to quaternary structure, monomer. Requires FAD as cofactor.

The enzyme catalyses glycine + O2 + H2O = glyoxylate + H2O2 + NH4(+). It carries out the reaction sarcosine + O2 + H2O = methylamine + glyoxylate + H2O2. It functions in the pathway cofactor biosynthesis; thiamine diphosphate biosynthesis. Its function is as follows. Catalyzes the oxidation of glycine, leading to glyoxyl imine and hydrogen peroxide as primary products; glyoxyl imine is used for the biosynthesis of the thiazole ring of thiamine. Otherwise, glyoxyl imine is spontaneously hydrolyzed in water to produce glyoxylate and ammonia. Can also use sarcosine (N-methylglycine) as substrate. The chain is Glycine oxidase from Pseudomonas aeruginosa (strain ATCC 15692 / DSM 22644 / CIP 104116 / JCM 14847 / LMG 12228 / 1C / PRS 101 / PAO1).